The following is a 509-amino-acid chain: Maturase K (509 aa).

The protein belongs to the intron maturase 2 family. MatK subfamily.

Its subcellular location is the plastid. The protein localises to the chloroplast. Its function is as follows. Usually encoded in the trnK tRNA gene intron. Probably assists in splicing its own and other chloroplast group II introns. The sequence is that of Maturase K from Clematis ligusticifolia (Western white clematis).